The chain runs to 101 residues: Small ribosomal subunit protein uS14 (101 aa).

The protein belongs to the universal ribosomal protein uS14 family. As to quaternary structure, part of the 30S ribosomal subunit. Contacts proteins S3 and S10.

Binds 16S rRNA, required for the assembly of 30S particles and may also be responsible for determining the conformation of the 16S rRNA at the A site. In Gluconobacter oxydans (strain 621H) (Gluconobacter suboxydans), this protein is Small ribosomal subunit protein uS14.